The sequence spans 182 residues: Hypoxanthine/guanine phosphoribosyltransferase (182 aa).

The protein belongs to the purine/pyrimidine phosphoribosyltransferase family. Archaeal HPRT subfamily. In terms of assembly, homodimer.

It localises to the cytoplasm. It catalyses the reaction IMP + diphosphate = hypoxanthine + 5-phospho-alpha-D-ribose 1-diphosphate. The catalysed reaction is GMP + diphosphate = guanine + 5-phospho-alpha-D-ribose 1-diphosphate. It participates in purine metabolism; IMP biosynthesis via salvage pathway; IMP from hypoxanthine: step 1/1. Catalyzes a salvage reaction resulting in the formation of IMP that is energically less costly than de novo synthesis. This chain is Hypoxanthine/guanine phosphoribosyltransferase, found in Methanospirillum hungatei JF-1 (strain ATCC 27890 / DSM 864 / NBRC 100397 / JF-1).